Here is a 439-residue protein sequence, read N- to C-terminus: Proline--tRNA ligase (439 aa).

Belongs to the class-II aminoacyl-tRNA synthetase family. ProS type 2 subfamily. As to quaternary structure, homodimer.

It localises to the cytoplasm. The catalysed reaction is tRNA(Pro) + L-proline + ATP = L-prolyl-tRNA(Pro) + AMP + diphosphate. Functionally, catalyzes the attachment of proline to tRNA(Pro) in a two-step reaction: proline is first activated by ATP to form Pro-AMP and then transferred to the acceptor end of tRNA(Pro). The sequence is that of Proline--tRNA ligase from Parvibaculum lavamentivorans (strain DS-1 / DSM 13023 / NCIMB 13966).